The sequence spans 137 residues: MTMSDDNENEQPLNLDIPDHLEYSEEHAWVDRSVDPAIIGITEYAADQLGELVFVDLPEPGARVEAGDEIVELESSKAVQPLISPVAGTVKYVNRDVADDPSVVNGDPYGEGWLLKVELDDDEPELLSADEYAKVVR.

Residues 36–118 form the Lipoyl-binding domain; the sequence is PAIIGITEYA…YGEGWLLKVE (83 aa). An N6-lipoyllysine modification is found at Lys-77.

The protein belongs to the GcvH family. As to quaternary structure, the glycine cleavage system is composed of four proteins: P, T, L and H. It depends on (R)-lipoate as a cofactor.

The glycine cleavage system catalyzes the degradation of glycine. The H protein shuttles the methylamine group of glycine from the P protein to the T protein. This is Glycine cleavage system H protein from Bifidobacterium longum (strain NCC 2705).